A 291-amino-acid chain; its full sequence is uncharacterized protein (291 aa).

A run of 10 helical transmembrane segments spans residues 1–21 (MHNLIFAILCSVAVSVLLKIA), 26–46 (IIIEQAIAFNYITAITFSYFL), 67–87 (PIFLALGLLLPSVFIIMSKAV), 95–115 (SDAAQRLSLFLPILAAFLIFH), 117–137 (TLSQSKIIGVVLAFIGLFCLL), 149–169 (FKGVLGLIGVWFGYGIIDILF), 179–199 (FPATLFISFSLAACVMFIYLF), 208–228 (SSVIGGIVLGVLNFFNILFYI), 241–261 (VFAGMNIGVICLGTITGALVF), and 270–290 (WLGIIFSLSAIFCLYYLDKII). An EamA domain is found at 107 to 138 (ILAAFLIFHETLSQSKIIGVVLAFIGLFCLLT).

It is found in the cell membrane. This is an uncharacterized protein from Haemophilus influenzae (strain ATCC 51907 / DSM 11121 / KW20 / Rd).